Here is a 150-residue protein sequence, read N- to C-terminus: MKFIEVHTDGSCLGNPGPGGWAALLRYNGREKELAGGEAVSTNNRMELMAAIMALETLTEPCQIVLHTDSQYVRQGITEWMPGWVRRNWKTAGGDPVKNRELWERLHAATQRHRIDWRWVKGHNGDPDNERVDVLARNQAIAQRDGLATS.

The region spanning 1-141 (MKFIEVHTDG…VDVLARNQAI (141 aa)) is the RNase H type-1 domain. Mg(2+) is bound by residues Asp-9, Glu-47, Asp-69, and Asp-133.

This sequence belongs to the RNase H family. As to quaternary structure, monomer. Requires Mg(2+) as cofactor.

It is found in the cytoplasm. The enzyme catalyses Endonucleolytic cleavage to 5'-phosphomonoester.. In terms of biological role, endonuclease that specifically degrades the RNA of RNA-DNA hybrids. This Xanthomonas euvesicatoria pv. vesicatoria (strain 85-10) (Xanthomonas campestris pv. vesicatoria) protein is Ribonuclease H.